Here is a 316-residue protein sequence, read N- to C-terminus: L-lactate dehydrogenase 3 (316 aa).

NAD(+) contacts are provided by V16, D37, R42, and Y68. R91 is a binding site for substrate. NAD(+) contacts are provided by residues S104, 121–123 (ASN), and T146. 123-126 (NPVD) serves as a coordination point for substrate. Position 151 to 154 (151 to 154 (DSSR)) interacts with substrate. Beta-D-fructose 1,6-bisphosphate contacts are provided by R156 and H171. H178 (proton acceptor) is an active-site residue. Substrate is bound at residue T233.

It belongs to the LDH/MDH superfamily. LDH family. As to quaternary structure, homotetramer.

It is found in the cytoplasm. It catalyses the reaction (S)-lactate + NAD(+) = pyruvate + NADH + H(+). Its pathway is fermentation; pyruvate fermentation to lactate; (S)-lactate from pyruvate: step 1/1. With respect to regulation, allosterically activated by fructose 1,6-bisphosphate (FBP). In terms of biological role, catalyzes the conversion of lactate to pyruvate. This is L-lactate dehydrogenase 3 from Bacillus cereus (strain ATCC 14579 / DSM 31 / CCUG 7414 / JCM 2152 / NBRC 15305 / NCIMB 9373 / NCTC 2599 / NRRL B-3711).